We begin with the raw amino-acid sequence, 430 residues long: Enolase (430 aa).

A (2R)-2-phosphoglycerate-binding site is contributed by glutamine 163. Glutamate 205 (proton donor) is an active-site residue. 3 residues coordinate Mg(2+): aspartate 242, glutamate 287, and aspartate 314. 4 residues coordinate (2R)-2-phosphoglycerate: lysine 339, arginine 368, serine 369, and lysine 390. Lysine 339 serves as the catalytic Proton acceptor.

The protein belongs to the enolase family. Requires Mg(2+) as cofactor.

It is found in the cytoplasm. Its subcellular location is the secreted. The protein localises to the cell surface. The enzyme catalyses (2R)-2-phosphoglycerate = phosphoenolpyruvate + H2O. The protein operates within carbohydrate degradation; glycolysis; pyruvate from D-glyceraldehyde 3-phosphate: step 4/5. In terms of biological role, catalyzes the reversible conversion of 2-phosphoglycerate (2-PG) into phosphoenolpyruvate (PEP). It is essential for the degradation of carbohydrates via glycolysis. This Alkaliphilus metalliredigens (strain QYMF) protein is Enolase.